The chain runs to 177 residues: Peptide methionine sulfoxide reductase MsrA 2 (177 aa).

Cysteine 12 is a catalytic residue.

This sequence belongs to the MsrA Met sulfoxide reductase family.

It catalyses the reaction L-methionyl-[protein] + [thioredoxin]-disulfide + H2O = L-methionyl-(S)-S-oxide-[protein] + [thioredoxin]-dithiol. The catalysed reaction is [thioredoxin]-disulfide + L-methionine + H2O = L-methionine (S)-S-oxide + [thioredoxin]-dithiol. Functionally, has an important function as a repair enzyme for proteins that have been inactivated by oxidation. Catalyzes the reversible oxidation-reduction of methionine sulfoxide in proteins to methionine. The sequence is that of Peptide methionine sulfoxide reductase MsrA 2 (msrA2) from Staphylococcus aureus (strain NCTC 8325 / PS 47).